The following is a 436-amino-acid chain: Trigger factor (436 aa).

The PPIase FKBP-type domain occupies 163–248; the sequence is GDQVIIDFVG…VHSVQTKVLP (86 aa).

Belongs to the FKBP-type PPIase family. Tig subfamily.

The protein resides in the cytoplasm. The enzyme catalyses [protein]-peptidylproline (omega=180) = [protein]-peptidylproline (omega=0). Its function is as follows. Involved in protein export. Acts as a chaperone by maintaining the newly synthesized protein in an open conformation. Functions as a peptidyl-prolyl cis-trans isomerase. In Hydrogenovibrio crunogenus (strain DSM 25203 / XCL-2) (Thiomicrospira crunogena), this protein is Trigger factor.